The sequence spans 667 residues: Beta-galactosidase LacZ (667 aa).

Residue arginine 109 participates in substrate binding. Zn(2+) is bound at residue cysteine 113. Residue asparagine 147 participates in substrate binding. Glutamate 148 functions as the Proton donor in the catalytic mechanism. Zn(2+) contacts are provided by cysteine 153, cysteine 155, and cysteine 158. The active-site Nucleophile is the glutamate 307. Residues tryptophan 315 and 355-358 each bind substrate; that span reads EKFH.

It belongs to the glycosyl hydrolase 42 family.

The catalysed reaction is Hydrolysis of terminal non-reducing beta-D-galactose residues in beta-D-galactosides.. Its function is as follows. Catalyzes the hydrolysis of lactose to its constituent monosaccharides glucose and galactose. This is Beta-galactosidase LacZ from Lactobacillus acidophilus (strain ATCC 700396 / NCK56 / N2 / NCFM).